The following is a 242-amino-acid chain: NAD(P)H-quinone oxidoreductase subunit K (242 aa).

Positions 59, 60, 124, and 155 each coordinate [4Fe-4S] cluster.

Belongs to the complex I 20 kDa subunit family. As to quaternary structure, NDH-1 can be composed of about 15 different subunits; different subcomplexes with different compositions have been identified which probably have different functions. The cofactor is [4Fe-4S] cluster.

It is found in the cellular thylakoid membrane. The catalysed reaction is a plastoquinone + NADH + (n+1) H(+)(in) = a plastoquinol + NAD(+) + n H(+)(out). It catalyses the reaction a plastoquinone + NADPH + (n+1) H(+)(in) = a plastoquinol + NADP(+) + n H(+)(out). Functionally, NDH-1 shuttles electrons from an unknown electron donor, via FMN and iron-sulfur (Fe-S) centers, to quinones in the respiratory and/or the photosynthetic chain. The immediate electron acceptor for the enzyme in this species is believed to be plastoquinone. Couples the redox reaction to proton translocation, and thus conserves the redox energy in a proton gradient. Cyanobacterial NDH-1 also plays a role in inorganic carbon-concentration. In Synechococcus sp. (strain RCC307), this protein is NAD(P)H-quinone oxidoreductase subunit K.